Consider the following 182-residue polypeptide: ATP synthase subunit delta (182 aa).

This sequence belongs to the ATPase delta chain family. As to quaternary structure, F-type ATPases have 2 components, F(1) - the catalytic core - and F(0) - the membrane proton channel. F(1) has five subunits: alpha(3), beta(3), gamma(1), delta(1), epsilon(1). F(0) has three main subunits: a(1), b(2) and c(10-14). The alpha and beta chains form an alternating ring which encloses part of the gamma chain. F(1) is attached to F(0) by a central stalk formed by the gamma and epsilon chains, while a peripheral stalk is formed by the delta and b chains.

It localises to the cell inner membrane. In terms of biological role, f(1)F(0) ATP synthase produces ATP from ADP in the presence of a proton or sodium gradient. F-type ATPases consist of two structural domains, F(1) containing the extramembraneous catalytic core and F(0) containing the membrane proton channel, linked together by a central stalk and a peripheral stalk. During catalysis, ATP synthesis in the catalytic domain of F(1) is coupled via a rotary mechanism of the central stalk subunits to proton translocation. Functionally, this protein is part of the stalk that links CF(0) to CF(1). It either transmits conformational changes from CF(0) to CF(1) or is implicated in proton conduction. In Hydrogenobaculum sp. (strain Y04AAS1), this protein is ATP synthase subunit delta.